The following is a 216-amino-acid chain: Probable glutamine ABC transporter permease protein GlnM (216 aa).

Positions 17 to 205 constitute an ABC transmembrane type-1 domain; sequence FYHTLLASVI…VLTIPLSIGV (189 aa). Transmembrane regions (helical) follow at residues 21 to 41, 63 to 83, 85 to 105, 132 to 152, and 181 to 201; these read LLASVIALAGSFVLGVAVAVM, IPLLLITFVFYFGLPNAGLRL, GFQAGTVALTIYTSAFIAEAI, LHIILPQAIKIVIPPLGNQFL, and LVVFDVYIFVALFYLVLTIPL.

The protein belongs to the binding-protein-dependent transport system permease family. In terms of assembly, the complex is composed of two ATP-binding proteins (GlnQ), two transmembrane proteins (GlnM and GlnP) and a solute-binding protein (GlnH).

It is found in the cell membrane. Its function is as follows. Part of the ABC transporter complex GlnHMPQ involved in glutamine transport. Probably responsible for the translocation of the substrate across the membrane. The chain is Probable glutamine ABC transporter permease protein GlnM (glnM) from Bacillus subtilis (strain 168).